Reading from the N-terminus, the 473-residue chain is MNTQPHHSSPDSPQDGGWFPISIRLSGARVLLVGGGEIAVNKGRLLLDHGARIDVLAEKLHPAVQGWVENGRVRHVGERADEAVLRRLLPGCRLVYAATDSRDTNRQVAALADELNIPVCAVDDPGPSSFITPAQVRRGMVRVAVSTGGAAPVLARRLREQIETLLPEGTGRLATYMQSRRAFVSGRYPNVQDRKRIWEDFLDGPGAEAARSGDESRADARLEVLLDGERKSGEVWLVGAGPGDPDLLTLKALHLMQNADSVLYDNLVSPALLDMVRRDAELVFVGKQRDRHALPQDEINREMVRRAQGGERVLRLKGGDPFIFGRGGEEIEALVEAGVAFRLVPGISAANGCAAYSGIPLTHRDCAQACLFVTGHAKADGVLDLPWDDMADRRQTVVIYMGISTLPQLAAGLLGKGLPADWPVAIVERGTQPRQRVFTGTLSTIAQQAAEAQVKSPALVIVGQVVRHRVVSP.

The precorrin-2 dehydrogenase /sirohydrochlorin ferrochelatase stretch occupies residues 1 to 222 (MNTQPHHSSP…GDESRADARL (222 aa)). NAD(+)-binding positions include 37 to 38 (EI) and 58 to 59 (EK). A uroporphyrinogen-III C-methyltransferase region spans residues 233 to 473 (GEVWLVGAGP…QVVRHRVVSP (241 aa)). An S-adenosyl-L-methionine-binding site is contributed by proline 242. Aspartate 265 (proton acceptor) is an active-site residue. Lysine 287 (proton donor) is an active-site residue. Residues 318 to 320 (GGD), isoleucine 323, 348 to 349 (SA), methionine 401, and glycine 430 each bind S-adenosyl-L-methionine.

This sequence in the N-terminal section; belongs to the precorrin-2 dehydrogenase / sirohydrochlorin ferrochelatase family. It in the C-terminal section; belongs to the precorrin methyltransferase family.

The enzyme catalyses uroporphyrinogen III + 2 S-adenosyl-L-methionine = precorrin-2 + 2 S-adenosyl-L-homocysteine + H(+). The catalysed reaction is precorrin-2 + NAD(+) = sirohydrochlorin + NADH + 2 H(+). It catalyses the reaction siroheme + 2 H(+) = sirohydrochlorin + Fe(2+). The protein operates within cofactor biosynthesis; adenosylcobalamin biosynthesis; precorrin-2 from uroporphyrinogen III: step 1/1. Its pathway is cofactor biosynthesis; adenosylcobalamin biosynthesis; sirohydrochlorin from precorrin-2: step 1/1. It functions in the pathway porphyrin-containing compound metabolism; siroheme biosynthesis; precorrin-2 from uroporphyrinogen III: step 1/1. It participates in porphyrin-containing compound metabolism; siroheme biosynthesis; siroheme from sirohydrochlorin: step 1/1. The protein operates within porphyrin-containing compound metabolism; siroheme biosynthesis; sirohydrochlorin from precorrin-2: step 1/1. In terms of biological role, multifunctional enzyme that catalyzes the SAM-dependent methylations of uroporphyrinogen III at position C-2 and C-7 to form precorrin-2 via precorrin-1. Then it catalyzes the NAD-dependent ring dehydrogenation of precorrin-2 to yield sirohydrochlorin. Finally, it catalyzes the ferrochelation of sirohydrochlorin to yield siroheme. The protein is Siroheme synthase of Gluconobacter oxydans (strain 621H) (Gluconobacter suboxydans).